A 42-amino-acid chain; its full sequence is Large ribosomal subunit protein bL36 (42 aa).

This sequence belongs to the bacterial ribosomal protein bL36 family.

This chain is Large ribosomal subunit protein bL36, found in Ehrlichia canis (strain Jake).